Here is a 202-residue protein sequence, read N- to C-terminus: uncharacterized protein (202 aa).

The interval 178–202 (VCSSEDSEADRYSDYGWGGPSSPFN) is disordered.

This is an uncharacterized protein from Homo sapiens (Human).